The following is a 696-amino-acid chain: Polyribonucleotide nucleotidyltransferase (696 aa).

Mg(2+)-binding residues include aspartate 486 and aspartate 492. The 60-residue stretch at proline 553 to valine 612 folds into the KH domain. The 69-residue stretch at glycine 622–lysine 690 folds into the S1 motif domain.

This sequence belongs to the polyribonucleotide nucleotidyltransferase family. Mg(2+) is required as a cofactor.

The protein localises to the cytoplasm. It carries out the reaction RNA(n+1) + phosphate = RNA(n) + a ribonucleoside 5'-diphosphate. Involved in mRNA degradation. Catalyzes the phosphorolysis of single-stranded polyribonucleotides processively in the 3'- to 5'-direction. The protein is Polyribonucleotide nucleotidyltransferase of Leptospira borgpetersenii serovar Hardjo-bovis (strain JB197).